We begin with the raw amino-acid sequence, 325 residues long: MRSTLRKDLIELFSQAGSEFISGQKISDALGCSRTAVWKHIEELRKEGYEVEAVRRKGYRLIKKPGKLSESEIRFGLKTEVMGQHLIYQDVISSTQKTAHELANNNAPEGTLVVADKQTAGRGRMSRVWHSQEGNGIWMSLILRPDIPLQKTPQLTLLAAVAVVQGIEAAAGIQTDIKWPNDILINGKKTVGILTEMQAEEDRVRSVIIGIGINVNQQSDDFPDELKDIATSLSQASGEKIDRAGVIQHILLCFEKRYRDYMTHGFTPIKLLWESYALGIGTNMRARTLNGTFYGKALGIDDEGVLLLETQEGIKKIYSADIELG.

Residues 23–42 (GQKISDALGCSRTAVWKHIE) constitute a DNA-binding region (H-T-H motif). One can recognise a BPL/LPL catalytic domain in the interval 74–262 (RFGLKTEVMG…CFEKRYRDYM (189 aa)). Biotin-binding positions include glutamine 118, 122-124 (RGR), and lysine 189.

It belongs to the biotin--protein ligase family.

It carries out the reaction biotin + L-lysyl-[protein] + ATP = N(6)-biotinyl-L-lysyl-[protein] + AMP + diphosphate + H(+). Acts both as a biotin--[acetyl-CoA-carboxylase] ligase and a repressor. This Bacillus spizizenii (strain ATCC 23059 / NRRL B-14472 / W23) (Bacillus subtilis subsp. spizizenii) protein is Bifunctional ligase/repressor BirA.